Consider the following 347-residue polypeptide: Holliday junction branch migration complex subunit RuvB (347 aa).

The large ATPase domain (RuvB-L) stretch occupies residues 1–183 (MSEERFVSGH…FGVVLQLQFY (183 aa)). ATP is bound by residues Leu-22, Arg-23, Gly-64, Lys-67, Thr-68, Thr-69, 130–132 (EDF), Arg-173, Tyr-183, and Arg-220. Thr-68 contacts Mg(2+). A small ATPAse domain (RuvB-S) region spans residues 184 to 254 (SEEELTRILM…VADAGLRMMG (71 aa)). Residues 257–347 (AMGLDTVDHK…PEGPVQPRLF (91 aa)) are head domain (RuvB-H). DNA is bound by residues Arg-312 and Arg-317.

It belongs to the RuvB family. Homohexamer. Forms an RuvA(8)-RuvB(12)-Holliday junction (HJ) complex. HJ DNA is sandwiched between 2 RuvA tetramers; dsDNA enters through RuvA and exits via RuvB. An RuvB hexamer assembles on each DNA strand where it exits the tetramer. Each RuvB hexamer is contacted by two RuvA subunits (via domain III) on 2 adjacent RuvB subunits; this complex drives branch migration. In the full resolvosome a probable DNA-RuvA(4)-RuvB(12)-RuvC(2) complex forms which resolves the HJ.

It localises to the cytoplasm. It carries out the reaction ATP + H2O = ADP + phosphate + H(+). Its function is as follows. The RuvA-RuvB-RuvC complex processes Holliday junction (HJ) DNA during genetic recombination and DNA repair, while the RuvA-RuvB complex plays an important role in the rescue of blocked DNA replication forks via replication fork reversal (RFR). RuvA specifically binds to HJ cruciform DNA, conferring on it an open structure. The RuvB hexamer acts as an ATP-dependent pump, pulling dsDNA into and through the RuvAB complex. RuvB forms 2 homohexamers on either side of HJ DNA bound by 1 or 2 RuvA tetramers; 4 subunits per hexamer contact DNA at a time. Coordinated motions by a converter formed by DNA-disengaged RuvB subunits stimulates ATP hydrolysis and nucleotide exchange. Immobilization of the converter enables RuvB to convert the ATP-contained energy into a lever motion, pulling 2 nucleotides of DNA out of the RuvA tetramer per ATP hydrolyzed, thus driving DNA branch migration. The RuvB motors rotate together with the DNA substrate, which together with the progressing nucleotide cycle form the mechanistic basis for DNA recombination by continuous HJ branch migration. Branch migration allows RuvC to scan DNA until it finds its consensus sequence, where it cleaves and resolves cruciform DNA. The sequence is that of Holliday junction branch migration complex subunit RuvB from Symbiobacterium thermophilum (strain DSM 24528 / JCM 14929 / IAM 14863 / T).